Consider the following 819-residue polypeptide: Advillin (819 aa).

The interval 1 to 731 is core; the sequence is MSLSSAFRTV…YEQLKNELGD (731 aa). The Gelsolin-like 1 repeat unit spans residues 24 to 105; it reads MELVLVPLSA…VQYHESDTFR (82 aa). A Phosphotyrosine modification is found at Y85. A 1,2-diacyl-sn-glycero-3-phospho-(1D-myo-inositol-4,5-bisphosphate)-binding positions include 109-116 and 135-143; these read KRGIIYKK and RLLHVKGKR. 5 Gelsolin-like repeats span residues 144–215, 265–339, 407–486, 524–592, and 631–704; these read NIRA…KEAA, TEVA…SAMF, LVPV…RHFM, NTKA…PEFW, and TEVT…PPTF. Residues 628–819 are required for interaction with F-actin; that stretch reads FLVTEVTDFT…LQLKKEAGLF (192 aa). The headpiece stretch occupies residues 731 to 819; it reads DATAIVRITT…LQLKKEAGLF (89 aa). Residues 753–819 form the HP domain; sequence ESGPKYYPVE…LQLKKEAGLF (67 aa). At Y758 the chain carries Phosphotyrosine.

This sequence belongs to the villin/gelsolin family. Associates (via C-terminus) with actin. Interacts with F-actin. Interacts with SCARF1; the interaction occurs in embryonic dorsal root ganglions at 18 dpc and induces neurite-like outgrowth. Interacts with PLCE1. Interacts with ACTR2 and ACTR3; associates with the ARP2/3 complex. Expressed in dorsal root ganglion (DRG) neurons and superior cervical ganglia (SCG). Expressed in podocytes.

It localises to the cytoplasm. The protein localises to the cytoskeleton. The protein resides in the cell projection. Its subcellular location is the neuron projection. It is found in the axon. It localises to the lamellipodium. The protein localises to the cell junction. The protein resides in the focal adhesion. Functionally, ca(2+)-regulated actin-binding protein which plays an important role in actin bundling. May have a unique function in the morphogenesis of neuronal cells which form ganglia. Required for SREC1-mediated regulation of neurite-like outgrowth. Plays a role in regenerative sensory axon outgrowth and remodeling processes after peripheral injury in neonates. Involved in the formation of long fine actin-containing filopodia-like structures in fibroblast. Plays a role in ciliogenesis. In podocytes, controls lamellipodia formation through the regulation of EGF-induced diacylglycerol generation by PLCE1 and ARP2/3 complex assembly. The sequence is that of Advillin from Rattus norvegicus (Rat).